Here is a 246-residue protein sequence, read N- to C-terminus: Large ribosomal subunit protein uL3 (246 aa).

The residue at position 151 (Gln-151) is an N5-methylglutamine.

Belongs to the universal ribosomal protein uL3 family. As to quaternary structure, part of the 50S ribosomal subunit. Forms a cluster with proteins L14 and L19. Post-translationally, methylated by PrmB.

In terms of biological role, one of the primary rRNA binding proteins, it binds directly near the 3'-end of the 23S rRNA, where it nucleates assembly of the 50S subunit. This is Large ribosomal subunit protein uL3 from Bartonella henselae (strain ATCC 49882 / DSM 28221 / CCUG 30454 / Houston 1) (Rochalimaea henselae).